Reading from the N-terminus, the 43-residue chain is DRDSCVDKSKCGKYGYYGQCDECCKKAGDRAGTCVYYKCKCNP.

Disulfide bonds link cysteine 5–cysteine 23, cysteine 11–cysteine 34, cysteine 20–cysteine 39, and cysteine 24–cysteine 41.

Belongs to the ergtoxin family. Gamma-KTx 4 subfamily. As to expression, expressed by the venom gland.

The protein localises to the secreted. Its function is as follows. Reversibly blocks Kv11/ERG potassium channels. This is Potassium channel toxin gamma-KTx 4.13 from Centruroides noxius (Mexican scorpion).